The following is a 545-amino-acid chain: ATP synthase subunit alpha (545 aa).

173–180 lines the ATP pocket; that stretch reads GDRKTGKT.

It belongs to the ATPase alpha/beta chains family. As to quaternary structure, F-type ATPases have 2 components, CF(1) - the catalytic core - and CF(0) - the membrane proton channel. CF(1) has five subunits: alpha(3), beta(3), gamma(1), delta(1), epsilon(1). CF(0) has three main subunits: a(1), b(2) and c(9-12). The alpha and beta chains form an alternating ring which encloses part of the gamma chain. CF(1) is attached to CF(0) by a central stalk formed by the gamma and epsilon chains, while a peripheral stalk is formed by the delta and b chains.

The protein resides in the cell membrane. It carries out the reaction ATP + H2O + 4 H(+)(in) = ADP + phosphate + 5 H(+)(out). Its function is as follows. Produces ATP from ADP in the presence of a proton gradient across the membrane. The alpha chain is a regulatory subunit. In Renibacterium salmoninarum (strain ATCC 33209 / DSM 20767 / JCM 11484 / NBRC 15589 / NCIMB 2235), this protein is ATP synthase subunit alpha.